Consider the following 576-residue polypeptide: Arginine--tRNA ligase (576 aa).

A 'HIGH' region motif is present at residues Ala-126 to His-136.

The protein belongs to the class-I aminoacyl-tRNA synthetase family. Monomer.

Its subcellular location is the cytoplasm. It carries out the reaction tRNA(Arg) + L-arginine + ATP = L-arginyl-tRNA(Arg) + AMP + diphosphate. The protein is Arginine--tRNA ligase of Rickettsia peacockii (strain Rustic).